A 158-amino-acid chain; its full sequence is Glutathione peroxidase-like peroxiredoxin gpx1 (158 aa).

Cysteine 36 (cysteine sulfenic acid (-SOH) intermediate) is an active-site residue. The cysteines at positions 36 and 82 are disulfide-linked.

It belongs to the glutathione peroxidase family. Monomer.

The protein resides in the cytoplasm. Its subcellular location is the mitochondrion. It carries out the reaction a hydroperoxide + [thioredoxin]-dithiol = an alcohol + [thioredoxin]-disulfide + H2O. Its function is as follows. Glutathione peroxidase-like protein that protects cells during oxidative stress. Has peroxidase activity reducing hydrogen peroxide, alkyl and phospholipid hydroperoxides using preferentially thioredoxin as a reducing power. May act as a scavenger of H(2)O(2). This is Glutathione peroxidase-like peroxiredoxin gpx1 from Schizosaccharomyces pombe (strain 972 / ATCC 24843) (Fission yeast).